Here is a 381-residue protein sequence, read N- to C-terminus: 5-amino-6-(D-ribitylamino)uracil--L-tyrosine 4-hydroxyphenyl transferase (381 aa).

A Radical SAM core domain is found at 59–306; that stretch reads VTYVVNRNIN…TAVARIFLGN (248 aa). [4Fe-4S] cluster is bound by residues cysteine 73, cysteine 77, and cysteine 80.

This sequence belongs to the radical SAM superfamily. CofH family. As to quaternary structure, consists of two subunits, CofG and CofH. [4Fe-4S] cluster serves as cofactor.

The catalysed reaction is 5-amino-6-(D-ribitylamino)uracil + L-tyrosine + S-adenosyl-L-methionine = 5-amino-5-(4-hydroxybenzyl)-6-(D-ribitylimino)-5,6-dihydrouracil + 2-iminoacetate + 5'-deoxyadenosine + L-methionine + H(+). It functions in the pathway cofactor biosynthesis; coenzyme F0 biosynthesis. Functionally, catalyzes the radical-mediated synthesis of 5-amino-5-(4-hydroxybenzyl)-6-(D-ribitylimino)-5,6-dihydrouracil from 5-amino-6-(D-ribitylamino)uracil and L-tyrosine. The polypeptide is 5-amino-6-(D-ribitylamino)uracil--L-tyrosine 4-hydroxyphenyl transferase (Cyanothece sp. (strain PCC 7425 / ATCC 29141)).